A 351-amino-acid polypeptide reads, in one-letter code: Glycerol-1-phosphate dehydrogenase [NAD(P)+] (351 aa).

NAD(+) contacts are provided by residues 97-101 (GKVID) and 119-122 (TSPS). Asp-124 is a binding site for substrate. Ser-128 provides a ligand contact to NAD(+). Asp-171 lines the substrate pocket. The Zn(2+) site is built by Asp-171 and His-251. His-255 provides a ligand contact to substrate. Zn(2+) is bound at residue His-267.

The protein belongs to the glycerol-1-phosphate dehydrogenase family. In terms of assembly, homodimer. Zn(2+) serves as cofactor.

It localises to the cytoplasm. The enzyme catalyses sn-glycerol 1-phosphate + NAD(+) = dihydroxyacetone phosphate + NADH + H(+). It catalyses the reaction sn-glycerol 1-phosphate + NADP(+) = dihydroxyacetone phosphate + NADPH + H(+). Its pathway is membrane lipid metabolism; glycerophospholipid metabolism. Its function is as follows. Catalyzes the NAD(P)H-dependent reduction of dihydroxyacetonephosphate (DHAP or glycerone phosphate) to glycerol 1-phosphate (G1P). The G1P thus generated is used as the glycerophosphate backbone of phospholipids in the cellular membranes of Archaea. The chain is Glycerol-1-phosphate dehydrogenase [NAD(P)+] from Saccharolobus islandicus (strain L.S.2.15 / Lassen #1) (Sulfolobus islandicus).